Consider the following 188-residue polypeptide: Small ribosomal subunit protein bS16 (188 aa).

The segment at 155 to 188 (IAAASATEEAATEEVAEAAEEAPAAEENNETTEA) is disordered. The segment covering 164 to 188 (AATEEVAEAAEEAPAAEENNETTEA) has biased composition (acidic residues).

This sequence belongs to the bacterial ribosomal protein bS16 family.

This Flavobacterium johnsoniae (strain ATCC 17061 / DSM 2064 / JCM 8514 / BCRC 14874 / CCUG 350202 / NBRC 14942 / NCIMB 11054 / UW101) (Cytophaga johnsonae) protein is Small ribosomal subunit protein bS16.